We begin with the raw amino-acid sequence, 207 residues long: Peptidyl-tRNA hydrolase (207 aa).

Tyr-14 contacts tRNA. His-19 (proton acceptor) is an active-site residue. Residues Tyr-64, Asn-66, and Asn-112 each contribute to the tRNA site.

Belongs to the PTH family. In terms of assembly, monomer.

The protein resides in the cytoplasm. The catalysed reaction is an N-acyl-L-alpha-aminoacyl-tRNA + H2O = an N-acyl-L-amino acid + a tRNA + H(+). Its function is as follows. Hydrolyzes ribosome-free peptidyl-tRNAs (with 1 or more amino acids incorporated), which drop off the ribosome during protein synthesis, or as a result of ribosome stalling. Functionally, catalyzes the release of premature peptidyl moieties from peptidyl-tRNA molecules trapped in stalled 50S ribosomal subunits, and thus maintains levels of free tRNAs and 50S ribosomes. This chain is Peptidyl-tRNA hydrolase, found in Rhodopseudomonas palustris (strain HaA2).